Here is a 205-residue protein sequence, read N- to C-terminus: Type III pantothenate kinase (205 aa).

Position 5 to 12 (5 to 12 (DIGNTTYH)) interacts with ATP. Substrate is bound by residues Y68 and 72–75 (GIDR). Residue D74 is the Proton acceptor of the active site. D89 provides a ligand contact to K(+). S92 lines the ATP pocket. S144 is a binding site for substrate.

The protein belongs to the type III pantothenate kinase family. Homodimer. The cofactor is NH4(+). It depends on K(+) as a cofactor.

It localises to the cytoplasm. It carries out the reaction (R)-pantothenate + ATP = (R)-4'-phosphopantothenate + ADP + H(+). Its pathway is cofactor biosynthesis; coenzyme A biosynthesis; CoA from (R)-pantothenate: step 1/5. Its function is as follows. Catalyzes the phosphorylation of pantothenate (Pan), the first step in CoA biosynthesis. This chain is Type III pantothenate kinase, found in Sulfurimonas denitrificans (strain ATCC 33889 / DSM 1251) (Thiomicrospira denitrificans (strain ATCC 33889 / DSM 1251)).